The chain runs to 189 residues: UPF0301 protein RF_0044 (189 aa).

The protein belongs to the UPF0301 (AlgH) family.

The sequence is that of UPF0301 protein RF_0044 from Rickettsia felis (strain ATCC VR-1525 / URRWXCal2) (Rickettsia azadi).